An 87-amino-acid chain; its full sequence is Small ribosomal subunit protein uS17 (87 aa).

It belongs to the universal ribosomal protein uS17 family. As to quaternary structure, part of the 30S ribosomal subunit.

Functionally, one of the primary rRNA binding proteins, it binds specifically to the 5'-end of 16S ribosomal RNA. In Thiobacillus denitrificans (strain ATCC 25259 / T1), this protein is Small ribosomal subunit protein uS17.